The sequence spans 76 residues: Antimicrobial peptide Smp24 (76 aa).

The first 22 residues, 1-22 (MQYKTFLVIFMAYLLVTHEAEA), serve as a signal peptide directing secretion. The propeptide occupies 47–76 (SKRKRDVEDFFDPYQRDLDLELERLLSQLQ).

Belongs to the non-disulfide-bridged peptide (NDBP) superfamily. Medium-length antimicrobial peptide (group 3) family. As to expression, expressed by the venom gland.

Its subcellular location is the secreted. The protein resides in the target cell membrane. In terms of biological role, peptide that shows antimicrobial activity, moderate cytolysis on eukaryote cells and interference with DNA synthesis. Has potent activity against Gram-positive bacteria and moderate activity against Gram-negative bacteria, as well as moderate activity against fungi. Acts by inducing bacterial membrane disruption. Uses multiple modes of action depending on the membrane lipid composition. Uses a toroidal pore mechanism against the prokaryotic like membrane and forms hexagonal phase non-lamellar structures in eukaryotic-like membrane. Shows activity against B.subtilis (MIC=4 ug/ml), S.epidermidis (MIC=8 ug/ml), S.aureus (MIC=8 ug/ml), E.coli (MIC=64 ug/ml), K.pneumoniae (MIC=128 ug/ml), P.aeruginosa (MIC=256 ug/ml), and C.albicans (MIC=32 ug/ml). Shows moderate hemolysis activity. This Scorpio palmatus (Israeli golden scorpion) protein is Antimicrobial peptide Smp24.